Consider the following 208-residue polypeptide: Small ribosomal subunit protein uS4 (208 aa).

In terms of domain architecture, S4 RNA-binding spans 98 to 161; sequence QRLDNVVYRM…KNNPQIVRAI (64 aa).

This sequence belongs to the universal ribosomal protein uS4 family. Part of the 30S ribosomal subunit. Contacts protein S5. The interaction surface between S4 and S5 is involved in control of translational fidelity.

Functionally, one of the primary rRNA binding proteins, it binds directly to 16S rRNA where it nucleates assembly of the body of the 30S subunit. With S5 and S12 plays an important role in translational accuracy. The polypeptide is Small ribosomal subunit protein uS4 (Campylobacter concisus (strain 13826)).